Consider the following 310-residue polypeptide: MGFAPVTPAAVETYDPDVDHDDESNGLDGFRVRSKRSGKFSGGYSDSPREVGDGYGVRSRARSNMKMYGGFKSEFDSDHDSGSGFGLKRKYNGNPKVSADFDADSDDEIVLVPKATRLRTHGKPSSGDFSHGSGGGFPLKSFGDRNFASHGFKPKNFSKPEPNFSQDLDYDDEFDDDRAEREGFNPRIQSSRSSSRVNGYSRKDGSYPRNTGASNGYGSSSRFKHEQMNAAAEVESDPIDEVVSSVKMLTEMFVRVENSKMEMMREMEKSRMEMELKHCQMMLESQQQIIGAFAEALSEKKSTNARRPVS.

Residues 1-58 form a disordered region; it reads MGFAPVTPAAVETYDPDVDHDDESNGLDGFRVRSKRSGKFSGGYSDSPREVGDGYGVR. Positions 14 to 25 are enriched in acidic residues; the sequence is YDPDVDHDDESN. A phosphoserine mark is found at S77 and S105. 3 disordered regions span residues 115 to 135, 152 to 171, and 177 to 221; these read ATRL…GSGG, FKPK…LDYD, and DRAE…GSSS. Over residues 208 to 221 the composition is skewed to polar residues; the sequence is PRNTGASNGYGSSS.

In terms of assembly, interacts with FRI. Interacts with WAV3.

This Arabidopsis thaliana (Mouse-ear cress) protein is Protein FIP2.